An 810-amino-acid chain; its full sequence is Volume-regulated anion channel subunit LRRC8A (810 aa).

Met1 is subject to N-acetylmethionine. The Cytoplasmic portion of the chain corresponds to 1–22 (MIPVTELRYFADTQPAYRILKP). Residues 23–47 (WWDVFTDYISIVMLMIAVFGGTLQV) traverse the membrane as a helical segment. Residues 48-123 (TQDKMICLPC…YENRLHWFAK (76 aa)) are Extracellular-facing. Intrachain disulfides connect Cys54-Cys310, Cys57-Cys65, and Cys113-Cys295. Residues Asn66 and Asn83 are each glycosylated (N-linked (GlcNAc...) asparagine). A helical membrane pass occupies residues 124-142 (YFPYLVLLHTLIFLACSNF). Residues 143 to 264 (WFKFPRTSSK…EEGDIVYRLY (122 aa)) are Cytoplasmic-facing. Thr200 bears the Phosphothreonine mark. Ser202 carries the post-translational modification Phosphoserine. Thr215 bears the Phosphothreonine mark. A Phosphoserine modification is found at Ser217. A helical membrane pass occupies residues 265 to 286 (MRQTIIKVIKFALIICYTVYYV). Residues 287 to 316 (HNIKFDVDCTVDIESLTGYRTYRCAHPLAT) lie on the Extracellular side of the membrane. A helical membrane pass occupies residues 317–341 (LFKILASFYISLVIFYGLICMYTLW). Topologically, residues 342-810 (WMLRRSLKKY…RLWRADKEQA (469 aa)) are cytoplasmic. LRR repeat units lie at residues 411 to 422 (WTLDKLRQRLTK), 423 to 445 (NAQD…VFDL), 447 to 468 (ELEV…IAQL), 469 to 492 (TGLK…AFLR), 493 to 515 (ENLR…IYSL), 518 to 542 (LEEL…GLRE), 543 to 565 (LKRL…VTDV), 567 to 589 (VHLQ…SLKK), 590 to 613 (MVNL…IFSL), 614 to 637 (HNLQ…SFQH), 639 to 661 (HRLT…IGNL), 662 to 684 (TNLE…LFYC), 686 to 707 (KLRY…IGLL), 708 to 730 (QNLQ…LFQC), 732 to 753 (KLRA…VGEL), 754 to 776 (TNLT…LGEC), and 778 to 801 (LLKR…VKER). A Di-leucine motif motif is present at residues 706–707 (LL).

Belongs to the LRRC8 family. As to quaternary structure, heterohexamer; oligomerizes with other LRRC8 proteins (LRRC8B, LRRC8C, LRRC8D and/or LRRC8E) to form a heterohexamer. Can form homohexamers in vitro, but these have lower conductance than heterohexamers. In vivo, the subunit composition may depend primarily on expression levels, and heterooligomeric channels containing various proportions of the different LRRC8 proteins may coexist. Interact with GRB2. Interacts with NOX4; this interaction prevents the ubiquitin-mediated degradation of LRRC8A. Post-translationally, N-glycosylated. In terms of tissue distribution, ubiquitously expressed. High levels detected in the bone marrow; lower levels found in peripheral blood cells. Highly expressed in pancreatic beta cells.

The protein localises to the cell membrane. It localises to the lysosome membrane. The enzyme catalyses chloride(in) = chloride(out). It carries out the reaction iodide(out) = iodide(in). It catalyses the reaction taurine(out) = taurine(in). The catalysed reaction is L-aspartate(out) = L-aspartate(in). The enzyme catalyses L-glutamate(out) = L-glutamate(in). It carries out the reaction myo-inositol(out) = myo-inositol(in). It catalyses the reaction 2',3'-cGAMP(out) = 2',3'-cGAMP(in). Its activity is regulated as follows. Inhibited by (4-[(2-butyl-6,7-dichloro-2-cyclopentyl-2,3-dihydro-1-oxo-1H-inden-5-yl)oxy]butanoic acid), which plugs the channel like a cork in a bottle by binding in the extracellular selectivity filter and sterically occluding ion conduction. Lipids may block conduction in closed heterohexameric channels. Functionally, essential component of the volume-regulated anion channel (VRAC, also named VSOAC channel), an anion channel required to maintain a constant cell volume in response to extracellular or intracellular osmotic changes. The VRAC channel conducts iodide better than chloride and can also conduct organic osmolytes like taurine. Mediates efflux of amino acids, such as aspartate and glutamate, in response to osmotic stress. In complex with LRRC8C or LRRC8E, acts as a transporter of immunoreactive cyclic dinucleotide GMP-AMP (2'-3'-cGAMP), an immune messenger produced in response to DNA virus in the cytosol: mediates both import and export of 2'-3'-cGAMP, thereby promoting transfer of 2'-3'-cGAMP to bystander cells. In contrast, complexes containing LRRC8D inhibit transport of 2'-3'-cGAMP. Required for in vivo channel activity, together with at least one other family member (LRRC8B, LRRC8C, LRRC8D or LRRC8E); channel characteristics depend on the precise subunit composition. Can form functional channels by itself (in vitro). Involved in B-cell development: required for the pro-B cell to pre-B cell transition. Also required for T-cell development. Required for myoblast differentiation: VRAC activity promotes membrane hyperpolarization and regulates insulin-stimulated glucose metabolism and oxygen consumption. Also acts as a regulator of glucose-sensing in pancreatic beta cells: VRAC currents, generated in response to hypotonicity- or glucose-induced beta cell swelling, depolarize cells, thereby causing electrical excitation, leading to increase glucose sensitivity and insulin secretion. Also plays a role in lysosome homeostasis by forming functional lysosomal VRAC channels in response to low cytoplasmic ionic strength condition: lysosomal VRAC channels are necessary for the formation of large lysosome-derived vacuoles, which store and then expel excess water to maintain cytosolic water homeostasis. Acts as a key factor in NLRP3 inflammasome activation by modulating itaconate efflux and mitochondria function. This chain is Volume-regulated anion channel subunit LRRC8A, found in Mus musculus (Mouse).